A 196-amino-acid chain; its full sequence is GTP cyclohydrolase 1 (196 aa).

Zn(2+) contacts are provided by Cys-86, His-89, and Cys-157.

The protein belongs to the GTP cyclohydrolase I family. Toroid-shaped homodecamer, composed of two pentamers of five dimers.

The enzyme catalyses GTP + H2O = 7,8-dihydroneopterin 3'-triphosphate + formate + H(+). It participates in cofactor biosynthesis; 7,8-dihydroneopterin triphosphate biosynthesis; 7,8-dihydroneopterin triphosphate from GTP: step 1/1. In Parabacteroides distasonis (strain ATCC 8503 / DSM 20701 / CIP 104284 / JCM 5825 / NCTC 11152), this protein is GTP cyclohydrolase 1.